Reading from the N-terminus, the 128-residue chain is Aspartate 1-decarboxylase (128 aa).

Residue S25 is the Schiff-base intermediate with substrate; via pyruvic acid of the active site. S25 carries the post-translational modification Pyruvic acid (Ser). Substrate is bound at residue T57. The active-site Proton donor is Y58. Position 73–75 (73–75 (GSA)) interacts with substrate.

Belongs to the PanD family. In terms of assembly, heterooctamer of four alpha and four beta subunits. The cofactor is pyruvate. In terms of processing, is synthesized initially as an inactive proenzyme, which is activated by self-cleavage at a specific serine bond to produce a beta-subunit with a hydroxyl group at its C-terminus and an alpha-subunit with a pyruvoyl group at its N-terminus.

It localises to the cytoplasm. The enzyme catalyses L-aspartate + H(+) = beta-alanine + CO2. It functions in the pathway cofactor biosynthesis; (R)-pantothenate biosynthesis; beta-alanine from L-aspartate: step 1/1. Its function is as follows. Catalyzes the pyruvoyl-dependent decarboxylation of aspartate to produce beta-alanine. The protein is Aspartate 1-decarboxylase of Burkholderia thailandensis (strain ATCC 700388 / DSM 13276 / CCUG 48851 / CIP 106301 / E264).